Here is a 75-residue protein sequence, read N- to C-terminus: Cytochrome c oxidase assembly factor 5 (75 aa).

The CHCH domain occupies 28-66 (QTDCVLQEGKSPKECLKEGYCKALQVTFFECKRSILDTR). The Cx10C motif motif lies at 31–42 (CVLQEGKSPKEC). Intrachain disulfides connect Cys-31–Cys-58 and Cys-42–Cys-48. Positions 48 to 58 (CKALQVTFFEC) match the Cx9C motif motif.

The protein belongs to the PET191 family.

Its function is as follows. Involved in an early step of the mitochondrial complex IV assembly process. The protein is Cytochrome c oxidase assembly factor 5 (coa5) of Xenopus tropicalis (Western clawed frog).